A 111-amino-acid chain; its full sequence is Small ribosomal subunit protein uS17 (111 aa).

It belongs to the universal ribosomal protein uS17 family. In terms of assembly, part of the 30S ribosomal subunit.

Functionally, one of the primary rRNA binding proteins, it binds specifically to the 5'-end of 16S ribosomal RNA. The protein is Small ribosomal subunit protein uS17 of Archaeoglobus fulgidus (strain ATCC 49558 / DSM 4304 / JCM 9628 / NBRC 100126 / VC-16).